We begin with the raw amino-acid sequence, 170 residues long: Type IV pilus assembly protein C (170 aa).

The first 23 residues, 1–23 (MKSKLPLILINLSLISSPLGANA), serve as a signal peptide directing secretion. The interval 87-107 (KTVSKPAKSNTPPQQAPVNNS) is disordered. The segment covering 93 to 107 (AKSNTPPQQAPVNNS) has biased composition (polar residues). A coiled-coil region spans residues 109–166 (RSILEAELSNERKALTEAQKMLSQARLAKGGNINHQKINALQSNVLDRQQNIQALQRE).

The protein resides in the periplasm. Functionally, required for stabilizing type IV pilus (T4p) in extended, nonretracted conformation on the bacterial cell surface. The chain is Type IV pilus assembly protein C from Neisseria gonorrhoeae (strain ATCC 700825 / FA 1090).